A 164-amino-acid polypeptide reads, in one-letter code: ATP synthase subunit b (164 aa).

Residues 10 to 32 (AVAFVLFFVLFGKKLWTPLAAAL) form a helical membrane-spanning segment.

The protein belongs to the ATPase B chain family. In terms of assembly, F-type ATPases have 2 components, F(1) - the catalytic core - and F(0) - the membrane proton channel. F(1) has five subunits: alpha(3), beta(3), gamma(1), delta(1), epsilon(1). F(0) has three main subunits: a(1), b(2) and c(10-14). The alpha and beta chains form an alternating ring which encloses part of the gamma chain. F(1) is attached to F(0) by a central stalk formed by the gamma and epsilon chains, while a peripheral stalk is formed by the delta and b chains.

It localises to the cell inner membrane. Its function is as follows. F(1)F(0) ATP synthase produces ATP from ADP in the presence of a proton or sodium gradient. F-type ATPases consist of two structural domains, F(1) containing the extramembraneous catalytic core and F(0) containing the membrane proton channel, linked together by a central stalk and a peripheral stalk. During catalysis, ATP synthesis in the catalytic domain of F(1) is coupled via a rotary mechanism of the central stalk subunits to proton translocation. Component of the F(0) channel, it forms part of the peripheral stalk, linking F(1) to F(0). The polypeptide is ATP synthase subunit b (Gluconacetobacter diazotrophicus (strain ATCC 49037 / DSM 5601 / CCUG 37298 / CIP 103539 / LMG 7603 / PAl5)).